A 188-amino-acid polypeptide reads, in one-letter code: Putative pre-16S rRNA nuclease (188 aa).

The tract at residues 156 to 188 is disordered; the sequence is LRQGDAAPGGSDDERDEDGDTDGEDGGGDGGGE. The span at 166–188 shows a compositional bias: acidic residues; it reads SDDERDEDGDTDGEDGGGDGGGE.

The protein belongs to the YqgF nuclease family.

It is found in the cytoplasm. In terms of biological role, could be a nuclease involved in processing of the 5'-end of pre-16S rRNA. The sequence is that of Putative pre-16S rRNA nuclease from Rhodospirillum centenum (strain ATCC 51521 / SW).